Here is a 551-residue protein sequence, read N- to C-terminus: MAAPALSWRLPLLILLLPLATPWASATVNGTSQFTCFYNSRANISCVWSQDGALQDTSCQVHAWPDRRRWNQTCELLPVSQASWACNLILGAPDSQKLTTVDIVTLRVLCREGVRWRVMAIQDFKPFENLRLMAPISLQVVHVETHRCNISWEISQASHYFERHLEFEARTLSPGHTWEEAPLLTLKQKQEWICLETLTPDTQYEFQVRVKPLQGEFTTWSPWSQPLAFRTKPASLGKDTIPWLGHLLVGLSGAFGFIILVYLLINCRNTGPWLKKVLKCHTPDPSKFFSQLSSEHGGDVQKWLSSPFPSSSFSPGGLAPEISPLEVLERDKVTQLLLQQDKVPEPASLSSNHSLTSCFTNQGYFFFHLPDALEIEACQVYFTYDPYAEEDADEGVAGAPTGSSPQPLQPLSGEDDTYCTFPSRDGLLLFSPSLLGGPSPPSTAPGGSGAGEERMPPSLQERVPRDWDPQPLGPPTPGVPDLVDFQPPPELVLREAGEEVPDAGPREGVSFPWSRPPGQGEFRALNARLPLNTDAYLSLQELQGQDPTHLV.

The N-terminal stretch at 1-26 is a signal peptide; sequence MAAPALSWRLPLLILLLPLATPWASA. The Extracellular segment spans residues 27 to 240; sequence TVNGTSQFTC…TKPASLGKDT (214 aa). Residues Asn-29, Asn-43, and Asn-71 are each glycosylated (N-linked (GlcNAc...) asparagine). Cys-36 and Cys-46 form a disulfide bridge. Cys-74 and Cys-86 are disulfide-bonded. One can recognise a Fibronectin type-III domain in the interval 134–234; sequence APISLQVVHV…QPLAFRTKPA (101 aa). Asn-149 carries an N-linked (GlcNAc...) asparagine glycan. A WSXWS motif motif is present at residues 220–224; sequence WSPWS. The chain crosses the membrane as a helical span at residues 241 to 265; sequence IPWLGHLLVGLSGAFGFIILVYLLI. The Cytoplasmic portion of the chain corresponds to 266 to 551; sequence NCRNTGPWLK…LQGQDPTHLV (286 aa). A Box 1 motif motif is present at residues 278–286; the sequence is LKCHTPDPS. Disordered stretches follow at residues 393 to 412 and 433 to 476; these read DEGVAGAPTGSSPQPLQPLS and SLLG…GPPT.

It belongs to the type I cytokine receptor family. Type 4 subfamily. Non-covalent dimer of an alpha and a beta subunit. IL2R exists in 3 different forms: a high affinity dimer, an intermediate affinity monomer (beta subunit), and a low affinity monomer (alpha subunit). The high and intermediate affinity forms also associate with a gamma subunit. Interacts with SHB upon interleukin stimulation.

The protein resides in the cell membrane. It is found in the cell surface. Its function is as follows. Receptor for interleukin-2. This beta subunit is involved in receptor mediated endocytosis and transduces the mitogenic signals of IL2. Probably in association with IL15RA, involved in the stimulation of neutrophil phagocytosis by IL15. This is Interleukin-2 receptor subunit beta (IL2RB) from Pan troglodytes (Chimpanzee).